A 315-amino-acid polypeptide reads, in one-letter code: THO complex subunit 3 (315 aa).

WD repeat units lie at residues 18 to 57, 64 to 104, 106 to 145, 189 to 228, 231 to 270, and 272 to 311; these read GHKK…HSKA, GHTD…CTQQ, ELSG…PLHR, AHTA…CLRT, KLEW…TVHQ, and PCRA…RIFG.

The protein belongs to the THOC3 family. As to quaternary structure, component of the THO complex, which is composed of THO1, THO2, THO3, THO5, THO6 and THO7.

The protein localises to the nucleus. Acts as a component of the THO subcomplex of the TREX complex which is thought to couple mRNA transcription, processing and nuclear export. Contributes to the integrity of the endogenous trans-acting small interfering RNA (ta-siRNA) pathway. May process or transport a long RNA molecule so that it can be a template for secondary siRNA production. May participate in the trafficking of siRNA precursors to the ARGONAUTE catalytic center. Required for the generation of functional messenger ribonucleoproteins (mRNPs). The sequence is that of THO complex subunit 3 (THO3) from Arabidopsis thaliana (Mouse-ear cress).